The primary structure comprises 572 residues: Methionine--tRNA ligase (572 aa).

Residues proline 11–threonine 21 carry the 'HIGH' region motif. The Zn(2+) site is built by cysteine 143, cysteine 146, cysteine 156, and cysteine 159. The 'KMSKS' region signature appears at glutamine 334–serine 338. ATP is bound at residue lysine 337.

It belongs to the class-I aminoacyl-tRNA synthetase family. MetG type 1 subfamily. It depends on Zn(2+) as a cofactor.

It localises to the cytoplasm. It carries out the reaction tRNA(Met) + L-methionine + ATP = L-methionyl-tRNA(Met) + AMP + diphosphate. Functionally, is required not only for elongation of protein synthesis but also for the initiation of all mRNA translation through initiator tRNA(fMet) aminoacylation. This Aeropyrum pernix (strain ATCC 700893 / DSM 11879 / JCM 9820 / NBRC 100138 / K1) protein is Methionine--tRNA ligase (metG).